A 394-amino-acid chain; its full sequence is GTPase Era, mitochondrial (394 aa).

Residues 32–280 (KCLQLAVIGA…RDHLMSISPQ (249 aa)) form the Era-type G domain. The G1 stretch occupies residues 40 to 47 (GAPNVGKS). Position 40–47 (40–47 (GAPNVGKS)) interacts with GTP. The segment at 66–70 (DTTTR) is G2. A G3 region spans residues 87-90 (DSPG). Residues 87–91 (DSPGA) and 160–163 (NKID) each bind GTP. A G4 region spans residues 160 to 163 (NKID). The interval 259-261 (VSS) is G5.

This sequence belongs to the TRAFAC class TrmE-Era-EngA-EngB-Septin-like GTPase superfamily. Era GTPase family.

It localises to the mitochondrion matrix. The protein resides in the mitochondrion inner membrane. Functionally, probable GTPase that plays a role in the mitochondrial ribosomal small subunit assembly. Specifically binds the 12S mitochondrial rRNA (12S mt-rRNA) to a 33 nucleotide section delineating the 3' terminal stem-loop region. May act as a chaperone that protects the 12S mt-rRNA on the 28S mitoribosomal subunit during ribosomal small subunit assembly. May play a role in positively regulating mitochondrial function. Plays a role in fertility. This chain is GTPase Era, mitochondrial, found in Caenorhabditis elegans.